We begin with the raw amino-acid sequence, 115 residues long: MNPLIQSLTEGQLRSDIPNFRPGDTVRVHAKVVEGTRERIQIFEGVVISRKGQGISEMYTVRKISGGIGVERTFPIHTPRVDKIEVVRHGKVRRAKLYYLRALQGKAARIKEIRR.

This sequence belongs to the bacterial ribosomal protein bL19 family.

This protein is located at the 30S-50S ribosomal subunit interface and may play a role in the structure and function of the aminoacyl-tRNA binding site. The sequence is that of Large ribosomal subunit protein bL19 from Streptococcus pyogenes serotype M2 (strain MGAS10270).